We begin with the raw amino-acid sequence, 1060 residues long: Carbamoyl phosphate synthase large chain (1060 aa).

Residues 1 to 400 (MPRDESINKV…SLNKAIRSLD (400 aa)) are carboxyphosphate synthetic domain. ATP-binding residues include arginine 127, arginine 167, glycine 173, glycine 174, glutamine 206, valine 208, glutamate 213, glycine 240, isoleucine 241, histidine 242, glutamine 283, and glutamate 297. An ATP-grasp 1 domain is found at 131 to 326 (DSFMKKLNEP…IAKIAAKIAV (196 aa)). Positions 283, 297, and 299 each coordinate Mg(2+). Residues glutamine 283, glutamate 297, and asparagine 299 each contribute to the Mn(2+) site. Positions 401–539 (IGADGFTETP…YGCYDLEDEV (139 aa)) are oligomerization domain. The tract at residues 540 to 926 (EVSDRRKVLI…YKSQLSASMD (387 aa)) is carbamoyl phosphate synthetic domain. In terms of domain architecture, ATP-grasp 2 spans 664 to 858 (TEVLNKLGIP…LAKMAARLMM (195 aa)). ATP is bound by residues arginine 700, lysine 739, leucine 741, glutamate 746, glycine 771, valine 772, histidine 773, serine 774, glutamine 814, and glutamate 829. Mg(2+) contacts are provided by glutamine 814, glutamate 829, and asparagine 831. Mn(2+) contacts are provided by glutamine 814, glutamate 829, and asparagine 831. Residues 925-1060 (MDLLNEGKVF…VKSLDEYHGM (136 aa)) enclose the MGS-like domain. An allosteric domain region spans residues 927 to 1060 (LLNEGKVFIS…VKSLDEYHGM (134 aa)).

This sequence belongs to the CarB family. Composed of two chains; the small (or glutamine) chain promotes the hydrolysis of glutamine to ammonia, which is used by the large (or ammonia) chain to synthesize carbamoyl phosphate. Tetramer of heterodimers (alpha,beta)4. Mg(2+) serves as cofactor. Requires Mn(2+) as cofactor.

It catalyses the reaction hydrogencarbonate + L-glutamine + 2 ATP + H2O = carbamoyl phosphate + L-glutamate + 2 ADP + phosphate + 2 H(+). It carries out the reaction hydrogencarbonate + NH4(+) + 2 ATP = carbamoyl phosphate + 2 ADP + phosphate + 2 H(+). It participates in amino-acid biosynthesis; L-arginine biosynthesis; carbamoyl phosphate from bicarbonate: step 1/1. It functions in the pathway pyrimidine metabolism; UMP biosynthesis via de novo pathway; (S)-dihydroorotate from bicarbonate: step 1/3. Large subunit of the glutamine-dependent carbamoyl phosphate synthetase (CPSase). CPSase catalyzes the formation of carbamoyl phosphate from the ammonia moiety of glutamine, carbonate, and phosphate donated by ATP, constituting the first step of 2 biosynthetic pathways, one leading to arginine and/or urea and the other to pyrimidine nucleotides. The large subunit (synthetase) binds the substrates ammonia (free or transferred from glutamine from the small subunit), hydrogencarbonate and ATP and carries out an ATP-coupled ligase reaction, activating hydrogencarbonate by forming carboxy phosphate which reacts with ammonia to form carbamoyl phosphate. This chain is Carbamoyl phosphate synthase large chain, found in Methanothermobacter thermautotrophicus (strain ATCC 29096 / DSM 1053 / JCM 10044 / NBRC 100330 / Delta H) (Methanobacterium thermoautotrophicum).